The following is a 236-amino-acid chain: Small ribosomal subunit protein uS2c (236 aa).

This sequence belongs to the universal ribosomal protein uS2 family.

The protein resides in the plastid. It is found in the chloroplast. This chain is Small ribosomal subunit protein uS2c (rps2), found in Lolium perenne (Perennial ryegrass).